The following is a 209-amino-acid chain: Protein bli-3 (209 aa).

Residues 1–11 (MSGQGFSNADT) are compositionally biased toward polar residues. The segment at 1-24 (MSGQGFSNADTGNKPADPYKQANL) is disordered.

The sequence is that of Protein bli-3 (bli-3) from Neurospora crassa (strain ATCC 24698 / 74-OR23-1A / CBS 708.71 / DSM 1257 / FGSC 987).